We begin with the raw amino-acid sequence, 204 residues long: MRLFVGLGNPGTKYQGNRHNIGFMVVDEIARRHGFAPWRRRFQGEASEGALDQERVVLLKPATYMNESGNAVQDAARFFKLTEGDVVVFHDEIELPPAKVRVKVGGGIAGHNGLRSISAHIGNEYRRVRLGVGHPGVKERVHAHVLNDFAKSERPWVEALVDVVAENAALLVTARDSAFQNKVHLAMQAKGFVEKDAKGDNGGK.

Tyr-14 serves as a coordination point for tRNA. Residue His-19 is the Proton acceptor of the active site. 3 residues coordinate tRNA: Tyr-64, Asn-66, and Asn-112.

Belongs to the PTH family. Monomer.

Its subcellular location is the cytoplasm. It catalyses the reaction an N-acyl-L-alpha-aminoacyl-tRNA + H2O = an N-acyl-L-amino acid + a tRNA + H(+). Its function is as follows. Hydrolyzes ribosome-free peptidyl-tRNAs (with 1 or more amino acids incorporated), which drop off the ribosome during protein synthesis, or as a result of ribosome stalling. Functionally, catalyzes the release of premature peptidyl moieties from peptidyl-tRNA molecules trapped in stalled 50S ribosomal subunits, and thus maintains levels of free tRNAs and 50S ribosomes. In Nitrobacter hamburgensis (strain DSM 10229 / NCIMB 13809 / X14), this protein is Peptidyl-tRNA hydrolase.